The chain runs to 283 residues: Non-selective voltage-gated ion channel VDAC3 (283 aa).

Cys2 carries the post-translational modification N-acetylcysteine. Thr4 bears the Phosphothreonine mark. Lys12, Lys15, and Lys20 each carry N6-acetyllysine. A run of 2 beta stranded transmembrane segments spans residues 26–35 (MVKIDLRTKS) and 39–47 (VEFSTSGHA). Residue Lys53 forms a Glycyl lysine isopeptide (Lys-Gly) (interchain with G-Cter in ubiquitin) linkage. 3 beta stranded membrane-spanning segments follow: residues 54 to 64 (ASGNLETKYKI), 69 to 76 (LTFTQKWN), and 80 to 89 (TLGTEISWEN). Position 90 is an N6-acetyllysine (Lys90). The chain crosses the membrane as a beta stranded span at residues 95 to 104 (LKLTLDTIFV). Residues Lys109 and Lys110 each participate in a glycyl lysine isopeptide (Lys-Gly) (interchain with G-Cter in ubiquitin) cross-link. Beta stranded transmembrane passes span 111–120 (SGKLKASYKR), 123–130 (FSLGSNVD), 137–145 (TIYGWAVLA), 150–158 (LAGYQMSFD), 163–175 (KLSQ…GYKA), 178–185 (FQLHTHVN), 189–198 (EFGGSIYQKV), 202–211 (IETSINLAWT), 218–227 (RFGIAAKYKL), and 231–238 (TSLSAKVN). Ser241 is modified (phosphoserine). NAD(+) contacts are provided by residues 242 to 244 (LIG) and 260 to 264 (SALID). Beta stranded transmembrane passes span 242–251 (LIGLGYTQTL) and 254–263 (GVKLTLSALI). N6-acetyllysine; alternate is present on Lys266. Residue Lys266 forms a Glycyl lysine isopeptide (Lys-Gly) (interchain with G-Cter in ubiquitin); alternate linkage. Residues 273–282 (HKVGLGFELE) form a beta stranded membrane-spanning segment.

The protein belongs to the eukaryotic mitochondrial porin family. Interacts with ARMC12 in a TBC1D21-dependent manner. Interacts with MISFA. In terms of processing, ubiquitinated by PRKN during mitophagy, leading to its degradation and enhancement of mitophagy. Deubiquitinated by USP30.

Its subcellular location is the mitochondrion outer membrane. It localises to the membrane. It catalyses the reaction chloride(in) = chloride(out). The enzyme catalyses K(+)(in) = K(+)(out). Functionally, non-selective voltage-gated ion channel that mediates the transport of anions and cations through the mitochondrion outer membrane and plasma membrane. Forms a high-conducting channel with a stable open state and a voltage-induced closure with a mild preference for anions over cations. Involved in male fertility and sperm mitochondrial sheath formation. The polypeptide is Non-selective voltage-gated ion channel VDAC3 (Bos taurus (Bovine)).